Here is a 130-residue protein sequence, read N- to C-terminus: Small ribosomal subunit protein uS11 (130 aa).

It belongs to the universal ribosomal protein uS11 family. In terms of assembly, part of the 30S ribosomal subunit. Interacts with proteins S7 and S18. Binds to IF-3.

Functionally, located on the platform of the 30S subunit, it bridges several disparate RNA helices of the 16S rRNA. Forms part of the Shine-Dalgarno cleft in the 70S ribosome. This chain is Small ribosomal subunit protein uS11, found in Tropheryma whipplei (strain TW08/27) (Whipple's bacillus).